We begin with the raw amino-acid sequence, 264 residues long: Rhamnosyltransferase WbbL (264 aa).

Belongs to the glycosyltransferase 2 family.

Its pathway is bacterial outer membrane biogenesis; lipopolysaccharide biosynthesis. Functionally, rhamnosyltransferase involved in lipopolysaccharide biosynthesis. The chain is Rhamnosyltransferase WbbL (wbbL) from Escherichia coli (strain K12).